A 210-amino-acid chain; its full sequence is MAIQKILFASLLICSLIQSIHGAEKVRLFKELDKGALDVTTKPSREGPGVVLDAGKDTLNITWTLSSIGSKREAEFKIIKVKLCYAPPSQVDRPWRKTHDELFKDKTCPHKIIAKPYDKTLQSTTWTLERDIPTGTYFVRAYAVDAIGHEVAYGQSTDDAKKTNLFSVQAISGRHASLDIASICFSVFSVVALVVFFVNEKRKAKIEQSK.

The first 22 residues, 1-22, serve as a signal peptide directing secretion; that stretch reads MAIQKILFASLLICSLIQSIHG. A helical membrane pass occupies residues 178-198; sequence LDIASICFSVFSVVALVVFFV.

Belongs to the NAR2 family. Heterotetramer composed of two NRT2.1 and two NRT3.1. Interacts with NRT2.1 and NRT2.3. Interacts with all other NRT2 transporters, including NRT2.5. Highly expressed in roots. Detected in shoots.

The protein localises to the cell membrane. Acts as a dual component transporter with NTR2.1. Required for high-affinity nitrate transport. Acts as a repressor of lateral root initiation. May be involved in targeting NRT2 proteins to the plasma membrane. In Arabidopsis thaliana (Mouse-ear cress), this protein is High-affinity nitrate transporter 3.1 (NRT3.1).